Consider the following 523-residue polypeptide: NAD(P)H-quinone oxidoreductase subunit 2 (523 aa).

Helical transmembrane passes span 29–49 (AVAP…VDLA), 57–77 (WVPP…ALQW), 94–114 (LAIA…MISW), 128–148 (AGIL…TDLV), 182–202 (LLVG…LYGL), 223–243 (AALA…AVPF), 255–275 (PTPV…ALAL), 291–311 (LLFT…ALAQ), 317–337 (MLAY…VCGT), 345–365 (VLYT…IILF), 389–409 (LGLS…GFFG), 424–444 (VLVV…IGVI), and 477–497 (VALV…NPLF).

It belongs to the complex I subunit 2 family. As to quaternary structure, NDH-1 can be composed of about 15 different subunits; different subcomplexes with different compositions have been identified which probably have different functions.

It is found in the cellular thylakoid membrane. The catalysed reaction is a plastoquinone + NADH + (n+1) H(+)(in) = a plastoquinol + NAD(+) + n H(+)(out). The enzyme catalyses a plastoquinone + NADPH + (n+1) H(+)(in) = a plastoquinol + NADP(+) + n H(+)(out). Its function is as follows. NDH-1 shuttles electrons from an unknown electron donor, via FMN and iron-sulfur (Fe-S) centers, to quinones in the respiratory and/or the photosynthetic chain. The immediate electron acceptor for the enzyme in this species is believed to be plastoquinone. Couples the redox reaction to proton translocation, and thus conserves the redox energy in a proton gradient. Cyanobacterial NDH-1 also plays a role in inorganic carbon-concentration. This Synechococcus sp. (strain WH7803) protein is NAD(P)H-quinone oxidoreductase subunit 2.